Consider the following 82-residue polypeptide: Cytochrome b559 subunit alpha (82 aa).

The helical transmembrane segment at 22–36 (VIHAVTLPSIFLAGY) threads the bilayer. Histidine 24 contacts heme.

The protein belongs to the PsbE/PsbF family. Heterodimer of an alpha subunit and a beta subunit. PSII is composed of 1 copy each of membrane proteins PsbA, PsbB, PsbC, PsbD, PsbE, PsbF, PsbH, PsbI, PsbJ, PsbK, PsbL, PsbM, PsbT, PsbX, PsbY, Psb30/Ycf12, peripheral proteins PsbO, CyanoQ (PsbQ), PsbU, PsbV and a large number of cofactors. It forms dimeric complexes. It depends on heme b as a cofactor.

Its subcellular location is the cellular thylakoid membrane. Functionally, this b-type cytochrome is tightly associated with the reaction center of photosystem II (PSII). PSII is a light-driven water:plastoquinone oxidoreductase that uses light energy to abstract electrons from H(2)O, generating O(2) and a proton gradient subsequently used for ATP formation. It consists of a core antenna complex that captures photons, and an electron transfer chain that converts photonic excitation into a charge separation. This Prochlorococcus marinus (strain MIT 9303) protein is Cytochrome b559 subunit alpha.